Consider the following 381-residue polypeptide: Formate dehydrogenase, mitochondrial (381 aa).

Residues 1–25 (MAMSRVASTAARAITSPSSLVFTRE) constitute a mitochondrion transit peptide. Substrate contacts are provided by I125 and N149. NAD(+) is bound by residues T150, 204–205 (RI), D224, 259–263 (PLTEK), N285, D311, and 335–338 (HISG).

This sequence belongs to the D-isomer specific 2-hydroxyacid dehydrogenase family. FDH subfamily. In terms of assembly, homodimer. In terms of tissue distribution, found at high levels in developing tubers, at intermediate level in stems, veins, stolons, and stamens, and at low level in leaves and roots.

It localises to the mitochondrion. The catalysed reaction is formate + NAD(+) = CO2 + NADH. Catalyzes the NAD(+)-dependent oxidation of formate to carbon dioxide. Involved in the cell stress response. Involved in formate-dependent oxygen uptake coupled to ATP synthesis. The polypeptide is Formate dehydrogenase, mitochondrial (Solanum tuberosum (Potato)).